The chain runs to 132 residues: Phosphoribosyl-AMP cyclohydrolase (132 aa).

Asp81 is a binding site for Mg(2+). Cys82 serves as a coordination point for Zn(2+). Mg(2+)-binding residues include Asp83 and Asp85. Zn(2+) is bound by residues Cys99 and Cys106.

It belongs to the PRA-CH family. As to quaternary structure, homodimer. It depends on Mg(2+) as a cofactor. Zn(2+) serves as cofactor.

The protein resides in the cytoplasm. The catalysed reaction is 1-(5-phospho-beta-D-ribosyl)-5'-AMP + H2O = 1-(5-phospho-beta-D-ribosyl)-5-[(5-phospho-beta-D-ribosylamino)methylideneamino]imidazole-4-carboxamide. It functions in the pathway amino-acid biosynthesis; L-histidine biosynthesis; L-histidine from 5-phospho-alpha-D-ribose 1-diphosphate: step 3/9. In terms of biological role, catalyzes the hydrolysis of the adenine ring of phosphoribosyl-AMP. The chain is Phosphoribosyl-AMP cyclohydrolase from Chromobacterium violaceum (strain ATCC 12472 / DSM 30191 / JCM 1249 / CCUG 213 / NBRC 12614 / NCIMB 9131 / NCTC 9757 / MK).